Reading from the N-terminus, the 206-residue chain is Small ribosomal subunit protein uS4 (206 aa).

An S4 RNA-binding domain is found at 96 to 156 (SRLDNVVYRM…EKSKKQLRIQ (61 aa)).

It belongs to the universal ribosomal protein uS4 family. As to quaternary structure, part of the 30S ribosomal subunit. Contacts protein S5. The interaction surface between S4 and S5 is involved in control of translational fidelity.

Its function is as follows. One of the primary rRNA binding proteins, it binds directly to 16S rRNA where it nucleates assembly of the body of the 30S subunit. In terms of biological role, with S5 and S12 plays an important role in translational accuracy. The sequence is that of Small ribosomal subunit protein uS4 from Francisella philomiragia subsp. philomiragia (strain ATCC 25017 / CCUG 19701 / FSC 153 / O#319-036).